The primary structure comprises 257 residues: UPF0246 protein Rsph17025_0016 (257 aa).

The protein belongs to the UPF0246 family.

This Cereibacter sphaeroides (strain ATCC 17025 / ATH 2.4.3) (Rhodobacter sphaeroides) protein is UPF0246 protein Rsph17025_0016.